A 478-amino-acid polypeptide reads, in one-letter code: Dynein regulatory complex subunit 4 (478 aa).

Basic residues predominate over residues 1–12 (MAPKKKGKKGKA). A disordered region spans residues 1 to 33 (MAPKKKGKKGKAKGTPIVDGLAPEDMSKEQVEE). The regulates microtubule-binding stretch occupies residues 1 to 114 (MAPKKKGKKG…LLYEHQNNLT (114 aa)). Residues 115–258 (EMKAEGTVVM…NSLKEQMEDM (144 aa)) form a microtubule-binding region. Residues 242-427 (LNNLALINSL…KDLQYELAQV (186 aa)) are a coiled coil. Residues 357–478 (QQKTGFKNLV…GPAGLVGTPT (122 aa)) are interaction with SMO.

It belongs to the DRC4 family. Component of the nexin-dynein regulatory complex (N-DRC). Interacts with microtubules. Interacts with SMO. Interacts (via coiled-coil domains) with RAB3B (in GTP-bound form). Interacts with DRC1. Interacts with DRC7. Expressed in respiratory epithelial cells (at protein level). Expressed in the heart, skeletal muscle, pancreas, liver, brain, trachea and lung. Weakly or not expressed in placenta and kidney.

Its subcellular location is the cytoplasm. The protein resides in the cytoskeleton. It localises to the cell projection. The protein localises to the cilium. It is found in the flagellum. Its subcellular location is the cilium axoneme. The protein resides in the cilium basal body. It localises to the golgi apparatus. The protein localises to the flagellum axoneme. Its function is as follows. Component of the nexin-dynein regulatory complex (N-DRC), a key regulator of ciliary/flagellar motility which maintains the alignment and integrity of the distal axoneme and regulates microtubule sliding in motile axonemes. Plays an important role in the assembly of the N-DRC linker. Plays dual roles at both the primary (or non-motile) cilia to regulate hedgehog signaling and in motile cilia to coordinate cilia movement. Required for proper motile cilia functioning. Positively regulates ciliary smoothened (SMO)-dependent Hedgehog (Hh) signaling pathway by facilitating the trafficking of SMO into the cilium and the stimulation of SMO activity in a GRK2-dependent manner. The protein is Dynein regulatory complex subunit 4 (GAS8) of Homo sapiens (Human).